A 336-amino-acid polypeptide reads, in one-letter code: Tetraacyldisaccharide 4'-kinase (336 aa).

Residue 60–67 coordinates ATP; it reads TVGGTGKT.

The protein belongs to the LpxK family.

It carries out the reaction a lipid A disaccharide + ATP = a lipid IVA + ADP + H(+). Its pathway is glycolipid biosynthesis; lipid IV(A) biosynthesis; lipid IV(A) from (3R)-3-hydroxytetradecanoyl-[acyl-carrier-protein] and UDP-N-acetyl-alpha-D-glucosamine: step 6/6. In terms of biological role, transfers the gamma-phosphate of ATP to the 4'-position of a tetraacyldisaccharide 1-phosphate intermediate (termed DS-1-P) to form tetraacyldisaccharide 1,4'-bis-phosphate (lipid IVA). This chain is Tetraacyldisaccharide 4'-kinase, found in Pseudomonas fluorescens (strain SBW25).